Reading from the N-terminus, the 390-residue chain is Phosphoglycerate kinase (390 aa).

Substrate contacts are provided by residues 21 to 23 (DLN), R36, 59 to 62 (HLGR), R114, and R147. ATP is bound by residues K198, E314, and 340–343 (GGDT).

This sequence belongs to the phosphoglycerate kinase family. Monomer.

The protein resides in the cytoplasm. It carries out the reaction (2R)-3-phosphoglycerate + ATP = (2R)-3-phospho-glyceroyl phosphate + ADP. The protein operates within carbohydrate degradation; glycolysis; pyruvate from D-glyceraldehyde 3-phosphate: step 2/5. This chain is Phosphoglycerate kinase, found in Buchnera aphidicola subsp. Acyrthosiphon pisum (strain 5A).